A 123-amino-acid polypeptide reads, in one-letter code: Ribosome-binding factor A (123 aa).

The protein belongs to the RbfA family. In terms of assembly, monomer. Binds 30S ribosomal subunits, but not 50S ribosomal subunits or 70S ribosomes.

The protein resides in the cytoplasm. One of several proteins that assist in the late maturation steps of the functional core of the 30S ribosomal subunit. Associates with free 30S ribosomal subunits (but not with 30S subunits that are part of 70S ribosomes or polysomes). Required for efficient processing of 16S rRNA. May interact with the 5'-terminal helix region of 16S rRNA. This Desulfatibacillum aliphaticivorans protein is Ribosome-binding factor A.